We begin with the raw amino-acid sequence, 319 residues long: Homoserine dehydrogenase (319 aa).

F10, T12, V13, R40, K57, S92, S93, S114, and K116 together coordinate NADPH. An NAD(+)-binding site is contributed by V13. The NADP(+) site is built by V13 and R40. S92 lines the NAD(+) pocket. S92 lines the NADP(+) pocket. S114 and K116 together coordinate NADP(+). E140, V143, A145, and T147 together coordinate Na(+). Residues G197 and E200 each coordinate NADP(+). Residues E200 and D211 each contribute to the L-homoserine site. Catalysis depends on K215, which acts as the Proton donor. An NADPH-binding site is contributed by G296. Residue G296 participates in NAD(+) binding. Residue G296 coordinates NADP(+).

It belongs to the homoserine dehydrogenase family. Homodimer. Requires a metal cation as cofactor.

It catalyses the reaction L-homoserine + NAD(+) = L-aspartate 4-semialdehyde + NADH + H(+). It participates in amino-acid biosynthesis; L-methionine biosynthesis via de novo pathway; L-homoserine from L-aspartate: step 3/3. It functions in the pathway amino-acid biosynthesis; L-threonine biosynthesis; L-threonine from L-aspartate: step 3/5. Functionally, catalyzes the conversion of L-aspartate-beta-semialdehyde (L-Asa) to L-homoserine (L-Hse), the third step in the biosynthesis of threonine and methionine from aspartate. Utilizes NADH but not NADPH as coenzyme. This is Homoserine dehydrogenase from Pyrococcus horikoshii (strain ATCC 700860 / DSM 12428 / JCM 9974 / NBRC 100139 / OT-3).